A 233-amino-acid chain; its full sequence is Large ribosomal subunit protein uL1 (233 aa).

Belongs to the universal ribosomal protein uL1 family. In terms of assembly, part of the 50S ribosomal subunit.

Functionally, binds directly to 23S rRNA. The L1 stalk is quite mobile in the ribosome, and is involved in E site tRNA release. Protein L1 is also a translational repressor protein, it controls the translation of the L11 operon by binding to its mRNA. This is Large ribosomal subunit protein uL1 from Thermotoga maritima (strain ATCC 43589 / DSM 3109 / JCM 10099 / NBRC 100826 / MSB8).